The chain runs to 329 residues: Phosphate acyltransferase (329 aa).

This sequence belongs to the PlsX family. Homodimer. Probably interacts with PlsY.

The protein resides in the cytoplasm. The enzyme catalyses a fatty acyl-[ACP] + phosphate = an acyl phosphate + holo-[ACP]. Its pathway is lipid metabolism; phospholipid metabolism. Catalyzes the reversible formation of acyl-phosphate (acyl-PO(4)) from acyl-[acyl-carrier-protein] (acyl-ACP). This enzyme utilizes acyl-ACP as fatty acyl donor, but not acyl-CoA. This chain is Phosphate acyltransferase, found in Anoxybacillus flavithermus (strain DSM 21510 / WK1).